A 504-amino-acid polypeptide reads, in one-letter code: Sucrose phosphorylase (504 aa).

Residue Asp50 coordinates substrate. Sucrose-binding positions include His88, 190–192, Glu232, 289–290, 342–345, and Arg399; these read RLD, HD, and DLYQ. Residue Asp192 is the Nucleophile of the active site. Glu232 acts as the Proton donor in catalysis.

It belongs to the glycosyl hydrolase 13 family. Sucrose phosphorylase subfamily. As to quaternary structure, homodimer.

It catalyses the reaction sucrose + phosphate = D-fructose + alpha-D-glucose 1-phosphate. Catalyzes the reversible phosphorolysis of sucrose into alpha-D-glucose 1-phosphate (Glc1P) and D-fructose. Is involved in sucrose degradation. Also displays transglucosylation activity in vitro, by transferring the glucosyl moiety of Glc1P to a broad range of monomeric sugars, such as D- and L-arabinose, D- and L-arabitol, and xylitol. This is Sucrose phosphorylase from Bifidobacterium adolescentis (strain ATCC 15703 / DSM 20083 / NCTC 11814 / E194a).